Reading from the N-terminus, the 237-residue chain is MASQDADALVTSSDPLHPANLIPELCRSFYQLGWVTGTGGGICIRTGDKVFIAPSGVQKERIESTHIFVLPYPQAAPSPHTDRAFLRRPAMNLKESACTPLFWNSFDLRNAGSCIHTHSQHAVMATLLWPGPVFTISHQEMIKGVRVGGTGAALSYLDTLELPIIENTPNEEDLKDSMAEAMLKYPDAAGVLVRRHGVYVWGNDWEKAKTQTECLDYLFEMGVRMKLAGLPTVLNEA.

A substrate-binding site is contributed by cysteine 98. Zn(2+)-binding residues include histidine 116 and histidine 118. Glutamate 140 functions as the Proton donor/acceptor in the catalytic mechanism. Zn(2+) is bound at residue histidine 196.

The protein belongs to the aldolase class II family. MtnB subfamily. It depends on Zn(2+) as a cofactor.

Its subcellular location is the cytoplasm. The enzyme catalyses 5-(methylsulfanyl)-D-ribulose 1-phosphate = 5-methylsulfanyl-2,3-dioxopentyl phosphate + H2O. It functions in the pathway amino-acid biosynthesis; L-methionine biosynthesis via salvage pathway; L-methionine from S-methyl-5-thio-alpha-D-ribose 1-phosphate: step 2/6. In terms of biological role, catalyzes the dehydration of methylthioribulose-1-phosphate (MTRu-1-P) into 2,3-diketo-5-methylthiopentyl-1-phosphate (DK-MTP-1-P). This is Methylthioribulose-1-phosphate dehydratase from Laccaria bicolor (strain S238N-H82 / ATCC MYA-4686) (Bicoloured deceiver).